Reading from the N-terminus, the 210-residue chain is Thymidylate kinase (210 aa).

10-17 provides a ligand contact to ATP; it reads GPEGAGKS.

The protein belongs to the thymidylate kinase family.

The enzyme catalyses dTMP + ATP = dTDP + ADP. Its function is as follows. Phosphorylation of dTMP to form dTDP in both de novo and salvage pathways of dTTP synthesis. The sequence is that of Thymidylate kinase from Pseudomonas entomophila (strain L48).